A 194-amino-acid polypeptide reads, in one-letter code: Xanthine phosphoribosyltransferase (194 aa).

Xanthine-binding residues include L20 and N27. 128–132 (ANGEA) contacts 5-phospho-alpha-D-ribose 1-diphosphate. K156 serves as a coordination point for xanthine.

Belongs to the purine/pyrimidine phosphoribosyltransferase family. Xpt subfamily. As to quaternary structure, homodimer.

The protein resides in the cytoplasm. It catalyses the reaction XMP + diphosphate = xanthine + 5-phospho-alpha-D-ribose 1-diphosphate. It functions in the pathway purine metabolism; XMP biosynthesis via salvage pathway; XMP from xanthine: step 1/1. Its function is as follows. Converts the preformed base xanthine, a product of nucleic acid breakdown, to xanthosine 5'-monophosphate (XMP), so it can be reused for RNA or DNA synthesis. This chain is Xanthine phosphoribosyltransferase, found in Macrococcus caseolyticus (strain JCSC5402) (Macrococcoides caseolyticum).